The sequence spans 624 residues: Forkhead box protein O1 (624 aa).

Disordered regions lie at residues M1–S62 and A94–N128. Position 24 is a phosphothreonine; by PKB/AKT1 or PKB/AKT2 and SGK1 (T24). Low complexity-rich tracts occupy residues S37–S62 and A105–P119. A DNA-binding region (fork-head) is located at residues W130–A224. DNA-binding stretches follow at residues N181–S188 and S204–W207. Residue S182 is modified to Phosphoserine; by STK4/MST1. Phosphoserine occurs at positions 188, 204, and 205. The disordered stretch occupies residues S204 to D306. 2 positions are modified to N6-acetyllysine: K215 and K218. S219 carries the phosphoserine; by CDK1 modification. R221 and R223 each carry omega-N-methylarginine; by PRMT1. The short motif at R221–R223 is the Nuclear localization signal element. Position 226 is a phosphoserine; by PKB/AKT1 and SGK1 (S226). N6-acetyllysine occurs at positions 232, 235, and 244. Basic residues predominate over residues A234 to A245. The segment at G253–Q532 is sufficient for interaction with NLK. Phosphoserine occurs at positions 257 and 268. Positions N279–G296 are enriched in polar residues. S289 carries the post-translational modification Phosphoserine; by PKB/AKT1. S292 is modified (phosphoserine; by CK1 and SGK1). S295 carries the phosphoserine; by CK1 modification. A Phosphoserine; by DYRK1A modification is found at S299. T303 carries the post-translational modification Phosphothreonine. A required for interaction with RUNX2 region spans residues S333–P428. K393 bears the N6-acetyllysine mark. Residues L431–L435 carry the Required for interaction with SIRT1 motif.

In terms of assembly, interacts with LRPPRC. Interacts with RUNX2; the interaction inhibits RUNX2 transcriptional activity and mediates the IGF1/insulin-dependent BGLAP expression in osteoblasts Interacts with PPP2R1A; the interaction regulates the dephosphorylation of FOXO1 at Thr-24 and Ser-263 leading to its nuclear import. Interacts with NLK. Interacts with SIRT1; the interaction results in the deacetylation of FOXO1 leading to activation of FOXO1-mediated transcription of genes involved in DNA repair and stress resistance. Binds to CDK1. Interacts with the 14-3-3 proteins, YWHAG and YWHAZ; the interactions require insulin-stimulated phosphorylation on Thr-24, promote nuclear exit and loss of transcriptional activity. Interacts with SKP2; the interaction ubiquitinates FOXO1 leading to its proteasomal degradation. The interaction requires the presence of KRIT1. Interacts (via the C-terminal half) with ATF4 (via its DNA binding domain); the interaction occurs in osteoblasts, regulates glucose homeostasis via suppression of beta-cell proliferation and subsequent decrease in insulin production. Interacts with PRMT1; the interaction methylates FOXO1, prevents PKB/AKT1 phosphorylation and retains FOXO1 in the nucleus. Interacts with EP300 and CREBBP; the interactions acetylate FOXO1. Interacts with SIRT2; the interaction is disrupted in response to oxidative stress or serum deprivation, leading to increased level of acetylated FOXO1, which promotes stress-induced autophagy by stimulating E1-like activating enzyme ATG7. Interacts (acetylated form) with ATG7; the interaction is increased in response to oxidative stress or serum deprivation and promotes the autophagic process leading to cell death. Interacts (acetylated form) with PPARG. Interacts with XBP1; this interaction is direct and leads to FOXO1 ubiquitination and degradation via the proteasome pathway. Interacts (via the Fork-head domain) with CEBPA; the interaction increases when FOXO1 is deacetylated. Interacts with WDFY2. Forms a complex with WDFY2 and AKT1. Interacts with CRY1. Interacts with PPIA/CYPA; the interaction promotes FOXO1 dephosphorylation, nuclear accumulation and transcriptional activity. Interacts with TOX4; FOXO1 is required for full induction of TOX4-dependent activity and the interaction is inhibited by insulin. Interacts (when phosphorylated on Ser-226) with STUB1/CHIP. Post-translationally, phosphorylation by NLK promotes nuclear export and inhibits the transcriptional activity. In response to growth factors, phosphorylation on Thr-24, Ser-226 and Ser-292 by PKB/AKT1 promotes nuclear export and inactivation of transactivational activity. Phosphorylation on Thr-24 is required for binding 14-3-3 proteins. Phosphorylation of Ser-226 decreases DNA-binding activity and promotes the phosphorylation of Thr-24 and Ser-289, permitting phosphorylation of Ser-292 and Ser-295, probably by CDK1, leading to nuclear exclusion and loss of function. Stress signals, such as response to oxygen or nitric oxide, attenuate the PKB/AKT1-mediated phosphorylation leading to nuclear retention. Phosphorylation of Ser-299 is independent of IGF1 and leads to reduced function. Dephosphorylated on Thr-24 and Ser-226 by PP2A in beta-cells under oxidative stress leading to nuclear retention. Phosphorylation of Ser-219 by CDK1 disrupts binding of 14-3-3 proteins leading to nuclear accumulation and has no effect on DNA binding nor transcriptional activity. Phosphorylation by STK4/MST1 on Ser-182, upon oxidative stress, inhibits binding to 14-3-3 proteins and nuclear export. PPIA/CYPA promotes its dephosphorylation on Ser-226. Ubiquitinated by SKP2. Ubiquitination leads to proteasomal degradation. Ubiquitinated by STUB1/CHIP; when Ser-226 is phosphorylated. In terms of processing, methylation inhibits AKT1-mediated phosphorylation at Ser-226 and is increased by oxidative stress. Post-translationally, acetylated. Acetylation at Lys-232 and Lys-244 are necessary for autophagic cell death induction. Deacetylated by SIRT2 in response to oxidative stress or serum deprivation, thereby negatively regulating FOXO1-mediated autophagic cell death. Once in the nucleus, acetylated by CREBBP/EP300. Acetylation diminishes the interaction with target DNA and attenuates the transcriptional activity. It increases the phosphorylation at Ser-226. Deacetylation by SIRT1 results in reactivation of the transcriptional activity. Oxidative stress by hydrogen peroxide treatment appears to promote deacetylation and uncoupling of insulin-induced phosphorylation. By contrast, resveratrol acts independently of acetylation. Acetylated at Lys-393, promoting its localization to the nucleus and transcription factor activity. Deacetylation at Lys-393 by SIRT6, promotes its translocation into the cytoplasm, preventing its transcription factor activity. Deacetylation and subsequent inhibition by SIRT6 has different effects depending on cell types: it inhibits gluconeogenesis in hepatocytes, promotes glucose sensing in pancreatic beta-cells and regulates lipid catabolism in brown adipocytes.

It localises to the cytoplasm. The protein resides in the nucleus. Its function is as follows. Transcription factor that is the main target of insulin signaling and regulates metabolic homeostasis in response to oxidative stress. Binds to the insulin response element (IRE) with consensus sequence 5'-TT[G/A]TTTTG-3' and the related Daf-16 family binding element (DBE) with consensus sequence 5'-TT[G/A]TTTAC-3'. Activity suppressed by insulin. Main regulator of redox balance and osteoblast numbers and controls bone mass. Orchestrates the endocrine function of the skeleton in regulating glucose metabolism. Also acts as a key regulator of chondrogenic commitment of skeletal progenitor cells in response to lipid availability: when lipids levels are low, translocates to the nucleus and promotes expression of SOX9, which induces chondrogenic commitment and suppresses fatty acid oxidation. Acts synergistically with ATF4 to suppress osteocalcin/BGLAP activity, increasing glucose levels and triggering glucose intolerance and insulin insensitivity. Also suppresses the transcriptional activity of RUNX2, an upstream activator of osteocalcin/BGLAP. Acts as an inhibitor of glucose sensing in pancreatic beta cells by acting as a transcription repressor and suppressing expression of PDX1. In hepatocytes, promotes gluconeogenesis by acting together with PPARGC1A and CEBPA to activate the expression of genes such as IGFBP1, G6PC1 and PCK1. Also promotes gluconeogenesis by directly promoting expression of PPARGC1A and G6PC1. Important regulator of cell death acting downstream of CDK1, PKB/AKT1 and STK4/MST1. Promotes neural cell death. Mediates insulin action on adipose tissue. Regulates the expression of adipogenic genes such as PPARG during preadipocyte differentiation and, adipocyte size and adipose tissue-specific gene expression in response to excessive calorie intake. Regulates the transcriptional activity of GADD45A and repair of nitric oxide-damaged DNA in beta-cells. Required for the autophagic cell death induction in response to starvation or oxidative stress in a transcription-independent manner. Mediates the function of MLIP in cardiomyocytes hypertrophy and cardiac remodeling. Positive regulator of apoptosis in cardiac smooth muscle cells as a result of its transcriptional activation of pro-apoptotic genes. Regulates endothelial cell (EC) viability and apoptosis in a PPIA/CYPA-dependent manner via transcription of CCL2 and BCL2L11 which are involved in EC chemotaxis and apoptosis. This Bos taurus (Bovine) protein is Forkhead box protein O1 (FOXO1).